The chain runs to 81 residues: Large ribosomal subunit protein bL31B (81 aa).

This sequence belongs to the bacterial ribosomal protein bL31 family. Type B subfamily. In terms of assembly, part of the 50S ribosomal subunit.

This Lactococcus lactis subsp. lactis (strain IL1403) (Streptococcus lactis) protein is Large ribosomal subunit protein bL31B.